We begin with the raw amino-acid sequence, 323 residues long: tRNA U34 carboxymethyltransferase (323 aa).

Residues K91, W105, K110, G130, 152–154 (DPT), 181–182 (IE), M196, Y200, and R315 contribute to the carboxy-S-adenosyl-L-methionine site.

This sequence belongs to the class I-like SAM-binding methyltransferase superfamily. CmoB family. In terms of assembly, homotetramer.

The enzyme catalyses carboxy-S-adenosyl-L-methionine + 5-hydroxyuridine(34) in tRNA = 5-carboxymethoxyuridine(34) in tRNA + S-adenosyl-L-homocysteine + H(+). In terms of biological role, catalyzes carboxymethyl transfer from carboxy-S-adenosyl-L-methionine (Cx-SAM) to 5-hydroxyuridine (ho5U) to form 5-carboxymethoxyuridine (cmo5U) at position 34 in tRNAs. This is tRNA U34 carboxymethyltransferase from Salmonella typhimurium (strain LT2 / SGSC1412 / ATCC 700720).